The chain runs to 350 residues: Zona pellucida-binding protein 1 (350 aa).

A signal peptide spans 1–44 (MEALAPGRAPRGRRRAGASGSVLSPLSLAAVLLCALLRAPPAVG). 3 N-linked (GlcNAc...) asparagine glycosylation sites follow: asparagine 113, asparagine 186, and asparagine 339.

The protein belongs to the zona pellucida-binding protein Sp38 family. Post-translationally, N-glycosylated. In terms of tissue distribution, expressed in testis (at protein level). Expressed in male germ cells.

Its subcellular location is the cytoplasmic vesicle. It is found in the secretory vesicle. The protein resides in the acrosome. It localises to the acrosome membrane. The protein localises to the secreted. Its function is as follows. Plays a role in acrosome compaction and sperm morphogenesis. Is implicated in sperm-oocyte interaction during fertilization. This is Zona pellucida-binding protein 1 (Zpbp) from Mus musculus (Mouse).